A 779-amino-acid polypeptide reads, in one-letter code: Pleckstrin homology domain-containing family A member 4 (779 aa).

The PH domain maps to 54–153 (PVHIRGWLHK…WLRALGKASR (100 aa)). Disordered stretches follow at residues 152-355 (SRAE…LPGP), 495-669 (AGLG…SGGH), and 694-766 (SPER…QEEG). Ser-164 is subject to Phosphoserine. A compositionally biased stretch (basic and acidic residues) spans 183-193 (VNRREEGRTSE). Composition is skewed to low complexity over residues 246 to 259 (PRPRSAPVRRPPLS) and 324 to 334 (QSTQVSSGSST). Basic and acidic residues predominate over residues 517 to 527 (QREESSERESL). Over residues 528–540 (SESLELSSPQSPE) the composition is skewed to low complexity. Ser-562 bears the Phosphoserine mark. Residues 567–580 (RASSPECRQQSSPL) show a composition bias toward polar residues. 2 stretches are compositionally biased toward low complexity: residues 608 to 627 (GLSLPRPTSPRLLTLGRTLS) and 649 to 659 (SSGSWSSPRHS). Polar residues predominate over residues 720 to 740 (VTSSPTSHKANSATTGFSCQG).

Its subcellular location is the cytoplasm. The protein resides in the membrane. In terms of biological role, binds specifically to phosphatidylinositol 3-phosphate (PtdIns3P), but not to other phosphoinositides. This chain is Pleckstrin homology domain-containing family A member 4 (Plekha4), found in Rattus norvegicus (Rat).